A 91-amino-acid chain; its full sequence is HssA/B-like protein 52 (91 aa).

2 disordered regions span residues 1–20 (MTLF…SKSS) and 72–91 (GGCG…CCGI).

This sequence belongs to the hssA/B family.

In Dictyostelium discoideum (Social amoeba), this protein is HssA/B-like protein 52 (hssl52).